The sequence spans 282 residues: PAK4-inhibitor INKA1 (282 aa).

Disordered regions lie at residues 21–50 (RDTG…QFRA) and 92–127 (GFSE…FSVS). 2 inka box regions span residues 163 to 200 (EAED…ELPE) and 256 to 282 (PADI…VSYL).

This sequence belongs to the INKA family. As to quaternary structure, interacts with PAK4. In terms of tissue distribution, expressed in tissues of the developing head during neurulation.

It localises to the nucleus. The protein resides in the cytoplasm. In terms of biological role, inhibitor of the serine/threonine-protein kinase PAK4. Acts by binding PAK4 in a substrate-like manner, inhibiting the protein kinase activity. In Mus musculus (Mouse), this protein is PAK4-inhibitor INKA1.